We begin with the raw amino-acid sequence, 877 residues long: Bifunctional uridylyltransferase/uridylyl-removing enzyme (877 aa).

Positions 1-335 (MDGPNSDRAH…HRDDAFSPTP (335 aa)) are uridylyltransferase. A uridylyl-removing region spans residues 336–695 (VNDHFQAVND…LRPESLRGSV (360 aa)). In terms of domain architecture, HD spans 454–576 (VDEHTLFVVR…VRNQNTLNHL (123 aa)). ACT domains are found at residues 696-778 (EVFI…AVSR) and 805-877 (ILEL…VGDQ).

The protein belongs to the GlnD family. The cofactor is Mg(2+).

The catalysed reaction is [protein-PII]-L-tyrosine + UTP = [protein-PII]-uridylyl-L-tyrosine + diphosphate. It catalyses the reaction [protein-PII]-uridylyl-L-tyrosine + H2O = [protein-PII]-L-tyrosine + UMP + H(+). Its activity is regulated as follows. Uridylyltransferase (UTase) activity is inhibited by glutamine, while glutamine activates uridylyl-removing (UR) activity. Functionally, modifies, by uridylylation and deuridylylation, the PII regulatory proteins (GlnB and homologs), in response to the nitrogen status of the cell that GlnD senses through the glutamine level. Under low glutamine levels, catalyzes the conversion of the PII proteins and UTP to PII-UMP and PPi, while under higher glutamine levels, GlnD hydrolyzes PII-UMP to PII and UMP (deuridylylation). Thus, controls uridylylation state and activity of the PII proteins, and plays an important role in the regulation of nitrogen fixation and metabolism. The sequence is that of Bifunctional uridylyltransferase/uridylyl-removing enzyme from Methylococcus capsulatus (strain ATCC 33009 / NCIMB 11132 / Bath).